Here is a 133-residue protein sequence, read N- to C-terminus: MSNLMKNFFTELVKSTTFTTKVSVVKTTLSNWLCEQVYPDKDFSLKLKRVVNMFLNNEIENNKIYKLVETVDSSNKLSRRQVDFLIHALLNNVSVTFTLHRFVDDNVLTQDELSFLANFLVTKMDEAYQLPAY.

As to quaternary structure, interacts with protein Ac76.

It is found in the virion. The protein resides in the host cytoplasm. It localises to the host nucleus. Functionally, plays a role in nuclear egress of nucleocapsids and intranuclear microvesicle formation. This Lepidoptera (butterflies and moths) protein is Protein Ac75 (Ac75).